A 245-amino-acid chain; its full sequence is rRNA adenine N-6-methyltransferase (245 aa).

The S-adenosyl-L-methionine site is built by N10, L12, G37, E58, D83, and S100.

This sequence belongs to the class I-like SAM-binding methyltransferase superfamily. rRNA adenine N(6)-methyltransferase family.

The enzyme catalyses adenosine(2085) in 23S rRNA + 2 S-adenosyl-L-methionine = N(6)-dimethyladenosine(2085) in 23S rRNA + 2 S-adenosyl-L-homocysteine + 2 H(+). This protein produces a dimethylation of the adenine residue at position 2085 in 23S rRNA, resulting in reduced affinity between ribosomes and macrolide-lincosamide-streptogramin B antibiotics. This Streptococcus sanguinis protein is rRNA adenine N-6-methyltransferase.